Consider the following 313-residue polypeptide: PDCD10 and GCKIII kinases-associated protein 1 (313 aa).

The segment at 42-95 (KGTQNSEVEVPGSTLHSGSLSKPDSSGSTTGLPCQGSLTQEDSEERPCVEKHGI) is disordered. Over residues 58 to 69 (SGSLSKPDSSGS) the composition is skewed to low complexity. A Phosphoserine modification is found at Ser60. The span at 70–81 (TTGLPCQGSLTQ) shows a compositional bias: polar residues. At Thr104 the chain carries Phosphothreonine. 3 positions are modified to phosphoserine: Ser107, Ser237, and Ser240. A disordered region spans residues 253-288 (YFKEEDPTQPTPVADPGNEREDPHTYNGNKEGAVVD).

Interacts with KEAP1; this interaction prevents the ubiquitination of KEAP1 by TRIM25, thus protecting KEAP1 from degradation. Found in association with PDCD10 and members of the STE20 kinases, such as STK24, STK25, and STK26.

Its subcellular location is the cell membrane. Acts as a tumor suppressor. Acts as a tumor suppressor for colorectal cancer cell proliferation by targeting KEAP1/USP17/ELK1/CDK6 axis. This Rattus norvegicus (Rat) protein is PDCD10 and GCKIII kinases-associated protein 1.